A 674-amino-acid chain; its full sequence is Xaa-Pro aminopeptidase 2 (674 aa).

An N-terminal signal peptide occupies residues methionine 1–tyrosine 22. N-linked (GlcNAc...) asparagine glycosylation is present at asparagine 65. Residue arginine 116 coordinates substrate. 2 N-linked (GlcNAc...) asparagine glycosylation sites follow: asparagine 278 and asparagine 293. Position 430 (histidine 430) interacts with substrate. Residues aspartate 450, aspartate 461, and histidine 524 each coordinate Zn(2+). Residues histidine 524, histidine 533, and glutamate 555 each coordinate substrate. Zn(2+) contacts are provided by glutamate 555 and glutamate 569. Alanine 650 carries the GPI-anchor amidated alanine lipid modification. Residues serine 651–cysteine 674 constitute a propeptide, removed in mature form.

The protein belongs to the peptidase M24B family. In terms of assembly, homotrimer. Requires Zn(2+) as cofactor. N-glycosylated. Expressed strongly in lung, liver and heart, and at lower levels in kidney, testis, brain, spleen and skeletal muscle.

Its subcellular location is the cell membrane. It catalyses the reaction Release of any N-terminal amino acid, including proline, that is linked to proline, even from a dipeptide or tripeptide.. Its activity is regulated as follows. Inhibited by the chelating agents 1,10-phenanthroline and EDTA. Inhibited by the thiol-containing compounds 2-mercaptoethanol and dithiothreitol. Also inhibited by apstatin, captopril and p-(ch1oromercuri)benzenesulfonic acid. Weakly inhibited by D,L-2-mercaptomethyl-3-guanidinoethylthiopropanoic acid and N-[l-(R,S)-carboxy-(2-phenylethyl)]-Ala-Ala-Phe-p-aminobenzoate. Inhibited by ramiprilat and enalaprilat, in a Mn(2+)-dependent manner. Metal ions have a complex substrate- and concentration-dependent effect on activity. Activity towards Arg-Pro-Pro and Gly-Pro-Hyp is stimulated by Mn(2+) ion concentrations of 10-100 uM and then inhibited at Mn(2+) concentrations of 1-2 mM. Mn(2+) concentrations in excess of 2 mM stimulate activity towards Gly-Pro-Hyp but inhibit activity towards Arg-Pro-Pro. Zn(2+) and Co(2+) ions also inhibit activity towards Arg-Pro-Pro at high concentrations. Activity towards bradykinin is inhibited by Mn(2+) concentrations in excess of 1 mM. Functionally, membrane-bound metalloprotease which catalyzes the removal of a penultimate prolyl residue from the N-termini of peptides, such as Arg-Pro-Pro. May play a role in the metabolism of the vasodilator bradykinin. The polypeptide is Xaa-Pro aminopeptidase 2 (Rattus norvegicus (Rat)).